Consider the following 665-residue polypeptide: MNFCSKNAQMYYIPVGLTSLQKDLIEILLCMHAESFLEEFGPSEAVMQSAAQIKTEKEPEAVEGLGLGPLTPTQMNTMLLRHLRAVANHPCLLVDHYMPRKFLLMEPGEELIAMSEKFRVLNQMMEAILSRRRRQRPLQLVLVSHSVKELDLIEGFMLGKMVKIKRLSGTSLFDEKHQYTERGTAAAESNSTLTSGSTLKDTSPGSVEGKLSSGEAGAGYTTGGIKDDYDYQNSRRHMRAADDGAERQCDHEDWLFLATTTHLTHCTDLFDQYDVDVVLSLDPLLDVSLPALRSVRKQSKSVPLVKLFVQDSAEHFMLTRGISAEHEEDHIYDAVGHFIKNRGVHRQRLGMSAAALAEVVTALLENCEAATDLKSTKPTDTPSELSIVDALSERIMLLKLNHTPYELPLQRGPFSMKSYQLQLKQLIYARLEACQREQECKCAYILDRRMQETANLNRLDEVNAEAGRLFQSLKDEEKLVVDSERRLERTRDEHDRLREKSAHLRRRKAELEELLASSDLDSRVSSKRARLAELRQQLMPLEQQNTAMADSNEELRTRYQTRSSHAATLSSALASLRERKAALTKESTGPATCWMAASATEEHDRLQTELNDLVQQRHFLQKYIDTMKSQYAITNLDELNRTQHNKSGAATSRVRTTRATSPTYI.

The disordered stretch occupies residues 181-219; it reads ERGTAAAESNSTLTSGSTLKDTSPGSVEGKLSSGEAGAG. Positions 187 to 205 are enriched in polar residues; that stretch reads AESNSTLTSGSTLKDTSPG. Residues 457–625 adopt a coiled-coil conformation; it reads NRLDEVNAEA…QRHFLQKYID (169 aa). The tract at residues 644–665 is disordered; that stretch reads HNKSGAATSRVRTTRATSPTYI. Low complexity predominate over residues 647–665; the sequence is SGAATSRVRTTRATSPTYI.

It belongs to the HDA2/3 family. HDA2 subfamily. In terms of assembly, probable component of some histone deacetylase complex.

It localises to the nucleus. Its function is as follows. Required for activity of histone deacetylase complexes that are responsible for the deacetylation of lysine residues on the N-terminal part of the core histones (H2A, H2B, H3 and H4). Histone deacetylation gives a tag for epigenetic repression and plays an important role in transcriptional regulation, cell cycle progression and developmental events. In Eremothecium gossypii (strain ATCC 10895 / CBS 109.51 / FGSC 9923 / NRRL Y-1056) (Yeast), this protein is HDA1 complex subunit 2 (HDA2).